We begin with the raw amino-acid sequence, 969 residues long: RNA polymerase-associated protein RapA (969 aa).

The Helicase ATP-binding domain occupies 162 to 339 (EVGQRVAPRV…FARLALLDAD (178 aa)). ATP is bound at residue 175–182 (DEVGLGKT). Positions 285-288 (DEAH) match the DEAH box motif. A Helicase C-terminal domain is found at 492-663 (RIEWLITFLK…GFLKNPQAVG (172 aa)).

The protein belongs to the SNF2/RAD54 helicase family. RapA subfamily. Interacts with the RNAP. Has a higher affinity for the core RNAP than for the holoenzyme. Its ATPase activity is stimulated by binding to RNAP.

In terms of biological role, transcription regulator that activates transcription by stimulating RNA polymerase (RNAP) recycling in case of stress conditions such as supercoiled DNA or high salt concentrations. Probably acts by releasing the RNAP, when it is trapped or immobilized on tightly supercoiled DNA. Does not activate transcription on linear DNA. Probably not involved in DNA repair. In Actinobacillus pleuropneumoniae serotype 5b (strain L20), this protein is RNA polymerase-associated protein RapA.